A 294-amino-acid polypeptide reads, in one-letter code: Glycine-rich protein 2 (294 aa).

Residues 1–20 form the signal peptide; that stretch reads MKMWFRLATFVTLIIEFAHC. Residues 205 to 221 show a composition bias toward low complexity; the sequence is TGSQTGAAANGTSAGAA. The tract at residues 205 to 225 is disordered; the sequence is TGSQTGAAANGTSAGAAVRGG.

As to expression, nacreous layer of shell (at protein level). Expressed primarily in the mantle with highest level in the mantle pallium and lower level in the mantle edge.

It localises to the secreted. The protein is Glycine-rich protein 2 of Pinctada maxima (Silver-lipped pearl oyster).